The primary structure comprises 837 residues: Exonuclease 1 (837 aa).

Residues 1-99 (MGIQGLLQFI…RSRRERRQSN (99 aa)) are N-domain. The Mg(2+) site is built by D30, D78, E150, D152, D171, D173, and D225. The segment at 129-386 (MAHKVIKAAR…RLEVNSVSHA (258 aa)) is interaction with MSH3. The I-domain stretch occupies residues 138 to 229 (RALGVDCLVA…ILSGCDYLAS (92 aa)). Disordered regions lie at residues 345–367 (TMPAHSRSHSWNEKAGQKPPGTN) and 440–477 (IKENGCGDGTSPNSSKMSKSCPDSGTAHKTDAHTPSKM). Residues 387-488 (PQLKEKPSTL…NKFATFLQRR (102 aa)) are interaction with MLH1. Over residues 449-462 (TSPNSSKMSKSCPD) the composition is skewed to polar residues. Residue K480 is modified to N6-acetyllysine. The interval 555-589 (NGTHNLSSQIPGNAAVSPEDEAQSSETSKLLGAMS) is disordered. A compositionally biased stretch (polar residues) spans 556–565 (GTHNLSSQIP). Residues S589 and S601 each carry the phosphoserine modification. An interaction with MSH2 region spans residues 591–837 (PSLGTLRSCF…CVRAQRAIFH (247 aa)). The tract at residues 608-740 (EFSRTPSPSA…GLCRSSSMDS (133 aa)) is disordered. 3 stretches are compositionally biased toward polar residues: residues 611 to 623 (RTPSPSASTTLQQ), 665 to 690 (SSRSQESMDSSCGLNTSSLSQPSSRD), and 699 to 713 (NNKSLDNQGEQNSKQ). T612 carries the post-translational modification Phosphothreonine. A phosphoserine mark is found at S614 and S666. Position 737 is a phosphoserine (S737). Positions 778-837 (LQTKISELWKNFGFKKDSEKLPSCKKPLSPVKDNIQLTPETEDEIFNKPECVRAQRAIFH) are interaction with MLH1.

This sequence belongs to the XPG/RAD2 endonuclease family. EXO1 subfamily. Interacts with the MLH1-PMS2 heterodimer via MLH1. Interacts with MSH3. Interacts with the MSH2-MSH6 heterodimer via MSH2, and this interaction may increase the processivity of the 5'-&gt;3' exonuclease activity. Interacts with PCNA, and this interaction may both stimulate the cryptic 3'-&gt;5' exonuclease activity and suppress the 5'-&gt;3' exonuclease activity. Interacts with WRN, and this interaction stimulates both the 5'-&gt;3' exonuclease activity and cleavage of 5'-overhanging flap structures. Interacts with RECQL/RECQ1, and this interaction stimulates cleavage of 5'-overhanging flap structures. Interacts with DNA helicase ZGRF1; the interaction is increased following DNA damage induction. The cofactor is Mg(2+). Phosphorylated upon DNA damage and in response to agents stalling DNA replication, probably by ATM or ATR. As to expression, highly expressed in the spleen and testis. Also expressed in the bone marrow, brain, lung, lymph node and thymus.

It is found in the nucleus. Its function is as follows. 5'-&gt;3' double-stranded DNA exonuclease which may also possess a cryptic 3'-&gt;5' double-stranded DNA exonuclease activity. Functions in DNA mismatch repair (MMR) to excise mismatch-containing DNA tracts directed by strand breaks located either 5' or 3' to the mismatch. Also exhibits endonuclease activity against 5'-overhanging flap structures similar to those generated by displacement synthesis when DNA polymerase encounters the 5'-end of a downstream Okazaki fragment. Required for somatic hypermutation (SHM) and class switch recombination (CSR) of immunoglobulin genes. Essential for male and female meiosis. The polypeptide is Exonuclease 1 (Exo1) (Mus musculus (Mouse)).